Reading from the N-terminus, the 1446-residue chain is ABC-type transporter oblD (1446 aa).

5 N-linked (GlcNAc...) asparagine glycosylation sites follow: Asn-9, Asn-28, Asn-222, Asn-281, and Asn-305. The 254-residue stretch at Leu-104–Asp-357 folds into the ABC transporter 1 domain. 6 helical membrane passes run Val-468–Tyr-488, Ala-502–Leu-522, Met-548–Phe-568, Gly-577–Phe-597, Ala-610–Pro-630, and Ile-719–Phe-739. One can recognise an ABC transporter 2 domain in the interval Phe-796–Gly-1038. Gly-832–Thr-839 serves as a coordination point for ATP. The next 5 helical transmembrane spans lie at Ala-1147–Ile-1167, Ile-1177–Ala-1197, Phe-1217–Phe-1237, Leu-1265–Phe-1285, and Leu-1301–Phe-1321. 2 N-linked (GlcNAc...) asparagine glycosylation sites follow: Asn-1344 and Asn-1359. The helical transmembrane segment at Phe-1412–Trp-1432 threads the bilayer.

It belongs to the ABC transporter superfamily. ABCG family. PDR (TC 3.A.1.205) subfamily.

Its subcellular location is the cell membrane. Functionally, ABC-type transporter; part of the gene cluster that mediates the biosynthesis of the sesterterpenes ophiobolins, fungal phytotoxins with potential anti-cancer activities. Acts as a specific transporter involved in ophiobolins secretion. This is ABC-type transporter oblD from Aspergillus clavatus (strain ATCC 1007 / CBS 513.65 / DSM 816 / NCTC 3887 / NRRL 1 / QM 1276 / 107).